The chain runs to 465 residues: uncharacterized protein (465 aa).

A helical transmembrane segment spans residues 56 to 76 (ILYMIIFAIFGLLPFLIALIF). Residues 177-198 (KFNKSKKSNKINDKTPILNNNN) are disordered. Residues 273-293 (LIFLLVSTILLIALIGFILII) form a helical membrane-spanning segment. The segment at 411–449 (NNYNNSNNNNNSNNSNSNNNNNNNNNNNNYNNNNYNNNN) is disordered.

The protein resides in the membrane. This is an uncharacterized protein from Dictyostelium discoideum (Social amoeba).